A 629-amino-acid chain; its full sequence is Keratin, type II cytoskeletal 3 (629 aa).

Residues 1 to 182 are head; sequence MNRQVCKTSG…DPQIGQVRAQ (182 aa). A phosphoserine mark is found at serine 13 and serine 62. Residues 183–218 are coil 1A; sequence EREQIKTLNNKFASFIDKVRFLEQQNKVLETKWELL. Positions 183–498 constitute an IF rod domain; sequence EREQIKTLNN…KLLEGEESRM (316 aa). Positions 219 to 239 are linker 1; that stretch reads QRQGPNSVTGTNNLEPLFENR. A coil 1B region spans residues 240-331; the sequence is INYLRSYLDS…TLYDAELSQM (92 aa). Lysine 281 bears the N6,N6-dimethyllysine mark. The linker 12 stretch occupies residues 332-355; it reads QSHVSDMSVVLSMDNNRSLDLDSI. Position 349 is a phosphoserine (serine 349). Positions 356–494 are coil 2; it reads IAEVRAQYED…ATYRKLLEGE (139 aa). Positions 495–629 are tail; the sequence is ESRMSGECQS…FSQSSQRYSR (135 aa). The segment at 603 to 629 is disordered; it reads SGGGFSSGSSSRGSSVKFSQSSQRYSR. Residues 618 to 629 show a composition bias toward polar residues; that stretch reads VKFSQSSQRYSR.

The protein belongs to the intermediate filament family. In terms of assembly, heterotetramer of two type I and two type II keratins. Keratin-3 associates with keratin-12. As to expression, cornea specific. Expressed in the basal cells of corneal epithelium and stroma. Also expressed in esophageal epithelium.

This chain is Keratin, type II cytoskeletal 3 (KRT3), found in Oryctolagus cuniculus (Rabbit).